The primary structure comprises 348 residues: Uroporphyrinogen decarboxylase (348 aa).

Residues 28-32 (RQAGR), aspartate 78, tyrosine 154, threonine 209, and histidine 325 each bind substrate.

This sequence belongs to the uroporphyrinogen decarboxylase family. As to quaternary structure, homodimer.

It localises to the cytoplasm. It carries out the reaction uroporphyrinogen III + 4 H(+) = coproporphyrinogen III + 4 CO2. It functions in the pathway porphyrin-containing compound metabolism; protoporphyrin-IX biosynthesis; coproporphyrinogen-III from 5-aminolevulinate: step 4/4. Functionally, catalyzes the decarboxylation of four acetate groups of uroporphyrinogen-III to yield coproporphyrinogen-III. This is Uroporphyrinogen decarboxylase from Rhodopseudomonas palustris (strain BisA53).